The chain runs to 1133 residues: Guanine nucleotide-binding protein G(s) subunit alpha isoforms XLas (1133 aa).

Disordered regions lie at residues 1-195 (MGMF…PEAL), 322-552 (DDTA…VPGA), 611-648 (SASA…WPDK), and 724-744 (RSRS…RKQM). Residues 31-48 (LEAPGAAAPGAGAGPAEE) show a composition bias toward low complexity. A compositionally biased stretch (basic and acidic residues) spans 347–362 (DKSECAERPPVEREAA). 5 stretches are compositionally biased toward low complexity: residues 391 to 404 (PEAM…AAQA), 459 to 471 (GGAA…TPAE), 482 to 498 (AEPA…ESAS), 515 to 525 (ATLAEPAARAA), and 535 to 552 (RAVP…VPGA). The span at 633–643 (PPTPRPPPRPT) shows a compositional bias: pro residues. Residues 732-744 (KAKDPMEERRKQM) show a composition bias toward basic and acidic residues. Residues 737–761 (MEERRKQMRKEAIEMREQKRADKKR) are a coiled coil. In terms of domain architecture, G-alpha spans 778 to 1133 (CTHRLLLLGA…RMHLRQYELL (356 aa)). Residues 781–794 (RLLLLGAGESGKST) form a G1 motif region. 786 to 794 (GAGESGKST) provides a ligand contact to GTP. Ser793 is a Mg(2+) binding site. The tract at residues 807–828 (FNGEGGEEDPQAARSNSDGEKA) is disordered. Residues 935–943 (DLLRCRVLT) are G2 motif. GTP is bound by residues 936-943 (LLRCRVLT), 962-966 (DVGGQ), and 1031-1034 (NKQD). ADP-ribosylarginine; by cholera toxin is present on Arg940. Thr943 is a binding site for Mg(2+). A G3 motif region spans residues 958 to 967 (FHMFDVGGQR). A G4 motif region spans residues 1027 to 1034 (ILFLNKQD). A Phosphoserine modification is found at Ser1091. The tract at residues 1103–1108 (TCAVDT) is G5 motif. A GTP-binding site is contributed by Ala1105.

The protein belongs to the G-alpha family. G(s) subfamily. As to quaternary structure, g proteins are composed of 3 units; alpha, beta and gamma. The alpha chain contains the guanine nucleotide binding site. Interacts through its N-terminal region with ALEX which is produced from the same locus in a different open reading frame. This interaction may inhibit its adenylyl cyclase-stimulating activity. Interacts with MAGED2.

The protein localises to the cell membrane. Its subcellular location is the apical cell membrane. It catalyses the reaction GTP + H2O = GDP + phosphate + H(+). In terms of biological role, guanine nucleotide-binding proteins (G proteins) function as transducers in numerous signaling pathways controlled by G protein-coupled receptors (GPCRs). The alpha chain contains the guanine nucleotide binding site and alternates between an active, GTP-bound state and an inactive, GDP-bound state. Signaling by an activated GPCR promotes GDP release and GTP binding. The alpha subunit has a low GTPase activity that converts bound GTP to GDP, thereby terminating the signal. Both GDP release and GTP hydrolysis are modulated by numerous regulatory proteins. Signaling involves the activation of adenylyl cyclases, resulting in increased levels of the signaling molecule cAMP. GNAS functions downstream of several GPCRs, including beta-adrenergic receptors. XLas isoforms interact with the same set of receptors as Gnas isoforms. The polypeptide is Guanine nucleotide-binding protein G(s) subunit alpha isoforms XLas (Mus musculus (Mouse)).